We begin with the raw amino-acid sequence, 355 residues long: Peptide chain release factor 1 (355 aa).

At glutamine 233 the chain carries N5-methylglutamine. The tract at residues 280-310 is disordered; that stretch reads ERRKKEQKRANNRRGQVGSGDRSERIRTYNF.

Belongs to the prokaryotic/mitochondrial release factor family. Methylated by PrmC. Methylation increases the termination efficiency of RF1.

It localises to the cytoplasm. Peptide chain release factor 1 directs the termination of translation in response to the peptide chain termination codons UAG and UAA. This Rickettsia canadensis (strain McKiel) protein is Peptide chain release factor 1.